Here is a 654-residue protein sequence, read N- to C-terminus: Neuroendocrine convertase 2 (654 aa).

The signal sequence occupies residues 1 to 21; sequence MAAATWSWLLAPFLLLHWASA. A propeptide spanning residues 22–121 is cleaved from the precursor; the sequence is GAGGGAGGSG…VQQPGFKRVK (100 aa). Positions 158–483 constitute a Peptidase S8 domain; the sequence is QWYLKNTGQN…FGVLDAGAMV (326 aa). The N-linked (GlcNAc...) asparagine glycan is linked to N189. Catalysis depends on charge relay system residues D196 and H237. Disulfide bonds link C254-C404 and C346-C376. N-linked (GlcNAc...) asparagine glycosylation occurs at N312. S412 functions as the Charge relay system in the catalytic mechanism. The P/Homo B domain occupies 491-627; the sequence is SVPPRYHCEA…SLVLHGTKEA (137 aa). Cysteines 498 and 524 form a disulfide. N-linked (GlcNAc...) asparagine glycosylation occurs at N544.

It belongs to the peptidase S8 family. Furin subfamily. As to expression, expressed in the central nervous system (CNS) and midgut endocrine cells of third instar larva (at protein level). In the CNS, expressed in the CA-LP1 and CA-LP2 neurons which innervate the corpus allatum, and in the CC-MS2 neurons which innervate the corpora cardiaca of the ring gland. Also expressed in the CC-MS1, SP3, Tv and Va neurons. Expressed in Akh-producing cells of the corpora cardiaca. In the embryo, restricted to the final stages of embryogenesis where expression is found in anterior sensory structures and in only 168 cells in the brain and ventral nerve cord. After larvae hatch, the sensory structures and most cells in the CNS turn off or substantially reduce expression. In third instar larva, expressed at higher levels in the anterior section than in the posterior section. Little expression is detected in the adult head. In the developing eye, expressed at higher levels in pale-type R7 photoreceptor cells than in yellow-type R7 cells although expression is not seen in all pale-type R7 cells. Also expressed in outer photoreceptor cells.

It is found in the secreted. The catalysed reaction is Release of protein hormones and neuropeptides from their precursors, generally by hydrolysis of -Lys-Arg-|- bonds.. Functionally, serine endopeptidase which is involved in the processing of hormone and other protein precursors at sites comprised of pairs of basic amino acid residues. Required during embryonic and larval development, probably by proteolytically processing peptide hormones involved in hatching, larval growth and larval molting. Required for the processing and activation of Akh which maintains normal hemolymph sugar levels. Has been shown in one study to be required for processing of sli into slit N-product and slit C-product in the embryo which is necessary for lateral transverse muscle elongation but has been shown in another study not to be required for sli cleavage. Required for larval hatching. Also required for normal larval wandering behavior which occurs prior to pupariation. Required during pupal development for head eversion, leg and wing disk extension, and abdominal differentiation. Required during eye development for R8 photoreceptor cell specification by regulating processing of ligands required for the BMP and activin signaling pathways. This Drosophila melanogaster (Fruit fly) protein is Neuroendocrine convertase 2.